A 426-amino-acid chain; its full sequence is Glutamate-1-semialdehyde 2,1-aminomutase (426 aa).

K265 carries the post-translational modification N6-(pyridoxal phosphate)lysine.

It belongs to the class-III pyridoxal-phosphate-dependent aminotransferase family. HemL subfamily. Homodimer. It depends on pyridoxal 5'-phosphate as a cofactor.

The protein resides in the cytoplasm. The enzyme catalyses (S)-4-amino-5-oxopentanoate = 5-aminolevulinate. Its pathway is porphyrin-containing compound metabolism; protoporphyrin-IX biosynthesis; 5-aminolevulinate from L-glutamyl-tRNA(Glu): step 2/2. The sequence is that of Glutamate-1-semialdehyde 2,1-aminomutase from Salmonella arizonae (strain ATCC BAA-731 / CDC346-86 / RSK2980).